We begin with the raw amino-acid sequence, 946 residues long: MKRRAGLGGSMRSVVGFLSQRGLHGDPLLTQDFQRRRLRGCRNLYKKDLLGHFGCVNAIEFSNNGGQWLVSGGDDRRVLLWHMEQAIHSRVKPIQLKGEHHSNIFCLAFNSGNTKVFSGGNDEQVILHDVESSETLDVFAHEDAVYGLSVSPVNDNIFASSSDDGRVLIWDIRESPHGEPFCLANYPSAFHSVMFNPVEPRLLATANSKEGVGLWDIRKPQSSLLRYGGNLSLQSAMSVRFNSNGTQLLALRRRLPPVLYDIHSRLPVFQFDNQGYFNSCTMKSCCFAGDRDQYILSGSDDFNLYMWKIPADPEAGGIGRVVNGAFMVLKGHRSIVNQVRFNPHTYMICSSGVEKIIKIWSPYKQPGCTGDLDGRIEDDSRCLYTHEEYISLVLNSGSGLSHDYANQSVQEDPRMMAFFDSLVRREIEGWSSDSDSDLSESTILQLHAGVSERSGYTDSESSASLPRSPPPTVDESADNAFHLGPLRVTTTNAVASTPATPTCEDASSRQQRLSALRRYQDKRLLALSNESDSEENVCEAELDTDLFPRPRSPSPEDGSSSPSSSTSSEDEEELNQRRATTRQRNAMRRRQKTARDERPTGPAKSTNTYIGEDNYDYPQIKVDDLSPSPDSSPERSASTLDVQPSRAPPAANMESVERKIYKAYKWLRCSYISYSNNKDGETSLMAEEADEGRAGTSHKDNPTPSSSKEACLTATAQRDQDLPSEGCSSDACKEGTSAGNPNSGAGHEHSSHPWAEVPEGTSQDTNNSGPLEHSFETKKLNGKALSKALSSRAEEPPASPGPKASGSTLNSASGNCPRTQSDDSEERSLDTVCANHNNGRLHPRPLHPHNNGQSSGELETVACSSPGHLDTDHDSPSLTGTFLHKDCCGSEMACETPSAGMREDPPDPSGLDSSKVVHGQSGLKRHRIELEDTESENSSSEKKLKT.

6 WD repeats span residues G51 to V91, E99 to F139, A140 to P180, N185 to L225, F277 to G317, and G331 to G370. Residues G449–D478 are disordered. The segment covering S454–L465 has biased composition (polar residues). Phosphothreonine is present on T500. Disordered stretches follow at residues L527–V656, S675–T860, and C894–T946. A phosphoserine mark is found at S531 and S533. The segment covering S531–T544 has biased composition (acidic residues). Over residues P555–S567 the composition is skewed to low complexity. Over residues A579 to K592 the composition is skewed to basic residues. The segment covering L625 to S638 has biased composition (low complexity). S626, S628, and S645 each carry phosphoserine. Residues E691 to N701 are compositionally biased toward basic and acidic residues. Polar residues-rich tracts occupy residues G760–G769 and T808–T819.

Interacts with DDB1, CUL4A or CUL4B. Interacts with L3MBTL3. Interacts with SOX2. Interacts with DNMT1. Interacts with E2F1.

The protein operates within protein modification; protein ubiquitination. Functionally, is a substrate receptor for the CUL4-DDB1 E3 ubiquitin-protein ligase complex (CRL4), involved in the ubiquitination of a set of methylated non-histone proteins, including SOX2. The complex CRL4-DCAF5 is also involved in the ubiquitination of methylated DNMT1 and E2F1. This Mus musculus (Mouse) protein is DDB1- and CUL4-associated factor 5 (Dcaf5).